Consider the following 432-residue polypeptide: Phosphoribosylamine--glycine ligase (432 aa).

The ATP-grasp domain occupies 110–316 (RNFMKDNDIE…MIDVMSAVVN (207 aa)). 137 to 194 (IEELGSVAIKPAGLTGGKGVKVMGDQLPDTGAAYDYAVSLLDGDNVVVEENLVGEEFT) lines the ATP pocket. Mg(2+)-binding residues include glutamine 274, glutamate 286, and asparagine 288. Mn(2+)-binding residues include glutamine 274, glutamate 286, and asparagine 288.

This sequence belongs to the GARS family. Requires Mg(2+) as cofactor. Mn(2+) is required as a cofactor.

It catalyses the reaction 5-phospho-beta-D-ribosylamine + glycine + ATP = N(1)-(5-phospho-beta-D-ribosyl)glycinamide + ADP + phosphate + H(+). It participates in purine metabolism; IMP biosynthesis via de novo pathway; N(1)-(5-phospho-D-ribosyl)glycinamide from 5-phospho-alpha-D-ribose 1-diphosphate: step 2/2. This chain is Phosphoribosylamine--glycine ligase, found in Methanococcoides burtonii (strain DSM 6242 / NBRC 107633 / OCM 468 / ACE-M).